Reading from the N-terminus, the 243-residue chain is Phosphoadenosine 5'-phosphosulfate reductase (243 aa).

The active-site Nucleophile; cysteine thiosulfonate intermediate is the cysteine 239.

The protein belongs to the PAPS reductase family. CysH subfamily.

It is found in the cytoplasm. The catalysed reaction is [thioredoxin]-disulfide + sulfite + adenosine 3',5'-bisphosphate + 2 H(+) = [thioredoxin]-dithiol + 3'-phosphoadenylyl sulfate. The protein operates within sulfur metabolism; hydrogen sulfide biosynthesis; sulfite from sulfate: step 3/3. Functionally, catalyzes the formation of sulfite from phosphoadenosine 5'-phosphosulfate (PAPS) using thioredoxin as an electron donor. This chain is Phosphoadenosine 5'-phosphosulfate reductase, found in Erwinia tasmaniensis (strain DSM 17950 / CFBP 7177 / CIP 109463 / NCPPB 4357 / Et1/99).